Here is a 424-residue protein sequence, read N- to C-terminus: Magnesium-chelatase subunit ChlI-1, chloroplastic (424 aa).

The transit peptide at 1 to 60 directs the protein to the chloroplast; that stretch reads MASLLGTSSSAIWASPSLSSPSSKPSSSPICFRPGKLFGSKLNAGIQIRPKKNRSRYHVS. Position 61 is an N-acetylvaline (Val-61). Cystine bridges form between Cys-102-Cys-193 and Cys-354-Cys-396. 119–126 is an ATP binding site; sequence GDRGTGKS. Ser-355 is subject to Phosphoserine.

Belongs to the Mg-chelatase subunits D/I family. In terms of assembly, the magnesium chelatase complex is a heterotrimer consisting of subunits CHLI, CHLD and CHLH. Interacts with CHLH and CHLD.

Its subcellular location is the plastid. It localises to the chloroplast. It carries out the reaction protoporphyrin IX + Mg(2+) + ATP + H2O = Mg-protoporphyrin IX + ADP + phosphate + 3 H(+). Its pathway is porphyrin-containing compound metabolism; chlorophyll biosynthesis. Redox regulation; active in reducing conditions, inactive in oxidizing conditions. Thioredoxins f and m mediate the reversible reductive activation of oxidized CHLI1. In terms of biological role, involved in chlorophyll biosynthesis. Catalyzes the insertion of magnesium ion into protoporphyrin IX to yield Mg-protoporphyrin IX. The magnesium-chelatase is a complex of three subunits, CHLI, CHLD and CHLH. The reaction takes place in two steps, with an ATP-dependent activation followed by an ATP-dependent chelation step. Possesses high affinity for ATP and may play a major role in chlorophyll biosynthesis. Does not bind abscisic acid (ABA), but is a positive regulator of ABA signaling. May be involved in ABA signaling in the control of stomatal aperture, but does not seem to have an effect on ABA-induced gene expression. This Arabidopsis thaliana (Mouse-ear cress) protein is Magnesium-chelatase subunit ChlI-1, chloroplastic (CHLI1).